Consider the following 444-residue polypeptide: Putative GTP cyclohydrolase URC1 (444 aa).

268–272 serves as a coordination point for GTP; that stretch reads RVHDE. Zn(2+)-binding residues include Cys-273, Cys-284, and Cys-286. 315–317 serves as a coordination point for GTP; sequence EGR. The Proton acceptor role is filled by Asp-353. Catalysis depends on Arg-355, which acts as the Nucleophile. 2 residues coordinate GTP: Ser-377 and Lys-382.

This sequence belongs to the GTP cyclohydrolase II family.

It is found in the cytoplasm. Its subcellular location is the nucleus. Its function is as follows. Involved in uracil catabolism. This Lachancea kluyveri (Yeast) protein is Putative GTP cyclohydrolase URC1 (URC1).